A 742-amino-acid chain; its full sequence is Tegument protein UL47 (742 aa).

Residues 1–10 (MDAARDGRPE) are compositionally biased toward basic and acidic residues. 2 disordered regions span residues 1-128 (MDAA…TAHL) and 155-199 (EFPP…DDAA). The Nuclear localization signal motif lies at 10 to 30 (ERRPRRSGTYRTHPFQRPSAR). The span at 18 to 37 (TYRTHPFQRPSARRSLLDAL) shows a compositional bias: low complexity. Residues 38-62 (RAADAEAAERPRVRRPRPDFQRPPD) are compositionally biased toward basic and acidic residues. The span at 63–88 (EDTSEDENVYDYIDGDSSDSADDYDS) shows a compositional bias: acidic residues. The Nuclear export signal signature appears at 95-122 (RGPNHGAGDAMDTDAPPERAPEGGAPQD). The short motif at 485-495 (LSAYLTLFVAL) is the Nuclear export signal element.

This sequence belongs to the alphaherpesvirinae HHV-1 UL47 family. As to quaternary structure, interacts with US3 kinase. Interacts with UL31 and UL34; these interactions seem important for efficient virion nuclear egress. Interacts with UL41/VHS. In terms of processing, phosphorylated by US3. This phosphorylation is required for proper nuclear localization.

It localises to the virion tegument. Its subcellular location is the host nucleus. The protein localises to the host cytoplasm. Functionally, tegument protein that can bind to various RNA transcripts. Plays a role in the attenuation of selective viral and cellular mRNA degradation by modulating the activity of host shutoff RNase UL41/VHS. Also plays a role in the primary envelopment of virions in the perinuclear space, probably by interacting with two nuclear egress proteins UL31 and UL34. The protein is Tegument protein UL47 of Bos taurus (Bovine).